The sequence spans 847 residues: Phenylalanine--tRNA ligase beta subunit (847 aa).

The tRNA-binding domain occupies 40-168; sequence FGIEGPVVVG…LDPEVGADAV (129 aa). One can recognise a B5 domain in the interval 426–501; the sequence is ADAEPIRLPD…RIVGFDRIPS (76 aa). Residues D479, D485, E488, and E489 each contribute to the Mg(2+) site. The 94-residue stretch at 753-846 folds into the FDX-ACB domain; that stretch reads AGFPAATQDL…AGQLFGAAIR (94 aa).

The protein belongs to the phenylalanyl-tRNA synthetase beta subunit family. Type 1 subfamily. As to quaternary structure, tetramer of two alpha and two beta subunits. Mg(2+) is required as a cofactor.

It localises to the cytoplasm. The enzyme catalyses tRNA(Phe) + L-phenylalanine + ATP = L-phenylalanyl-tRNA(Phe) + AMP + diphosphate + H(+). This chain is Phenylalanine--tRNA ligase beta subunit, found in Leifsonia xyli subsp. xyli (strain CTCB07).